Consider the following 227-residue polypeptide: MMKSENDGYDYDGKIRDIDIADEMKNGFLDYAMSVIVSRAIPDVRDGLKPVHRRIIYAMWDLKMTYEKQHKKSARIVGEVIGKYHPHGDTAVYEAMVRMAQDFSYRYPLIDGHGNFGSMDGDPPAAMRYTEAKMSKIAGEIIKDIEKETTIFIDNYDGSEEEPTFLPGYFPNLLVNGASGIAVGMATNIPPHNLNEVIDGVIAVTKNPEITTVELMKIIKGPDFPTG.

The 187-residue stretch at 41 to 227 (IPDVRDGLKP…IIKGPDFPTG (187 aa)) folds into the Topo IIA-type catalytic domain. The active-site O-(5'-phospho-DNA)-tyrosine intermediate is Tyr-129.

It belongs to the type II topoisomerase GyrA/ParC subunit family. As to quaternary structure, heterotetramer, composed of two GyrA and two GyrB chains. In the heterotetramer, GyrA contains the active site tyrosine that forms a transient covalent intermediate with DNA, while GyrB binds cofactors and catalyzes ATP hydrolysis.

The protein localises to the cytoplasm. The enzyme catalyses ATP-dependent breakage, passage and rejoining of double-stranded DNA.. Functionally, a type II topoisomerase that negatively supercoils closed circular double-stranded (ds) DNA in an ATP-dependent manner to modulate DNA topology and maintain chromosomes in an underwound state. Negative supercoiling favors strand separation, and DNA replication, transcription, recombination and repair, all of which involve strand separation. Also able to catalyze the interconversion of other topological isomers of dsDNA rings, including catenanes and knotted rings. Type II topoisomerases break and join 2 DNA strands simultaneously in an ATP-dependent manner. The sequence is that of DNA gyrase subunit A (gyrA) from Spiroplasma citri.